We begin with the raw amino-acid sequence, 409 residues long: Sprouty-related, EVH1 domain-containing protein 2 (409 aa).

The WH1 domain occupies 5–121; the sequence is APPEDDSYIV…RGVRKAIEDL (117 aa). A disordered region spans residues 121–170; that stretch reads LTEGSTTSSSTIHNEAELGDDDVFATSTDSSSNSSQKREPPVRTIASPLP. Polar residues predominate over residues 123-133; it reads EGSTTSSSTIH. Low complexity predominate over residues 146 to 155; it reads TSTDSSSNSS. The region spanning 199–253 is the KBD domain; sequence PHRHVSFPDDDDEIVRINPRERNWLTGYEDYRQAPIHRKYPDTESIDSYVRFAKS. Residues 299-407 enclose the SPR domain; the sequence is RCIYCRDMFN…CGCCGGKHKA (109 aa).

The protein resides in the cell membrane. Its subcellular location is the cytoplasmic vesicle. The protein localises to the secretory vesicle membrane. It is found in the cytoplasm. Negatively regulates Ras signaling pathways and downstream activation of MAP kinases. The protein is Sprouty-related, EVH1 domain-containing protein 2 (spred2) of Xenopus tropicalis (Western clawed frog).